Reading from the N-terminus, the 85-residue chain is uncharacterized protein (85 aa).

This is an uncharacterized protein from Saimiriine herpesvirus 2 (strain 488) (SaHV-2).